We begin with the raw amino-acid sequence, 300 residues long: Actin-related protein 2/3 complex subunit 2 (300 aa).

Lysine 275 and lysine 295 each carry N6-acetyllysine.

This sequence belongs to the ARPC2 family. As to quaternary structure, component of the Arp2/3 complex composed of ACTR2/ARP2, ACTR3/ARP3, ARPC1B/p41-ARC, ARPC2/p34-ARC, ARPC3/p21-ARC, ARPC4/p20-ARC and ARPC5/p16-ARC. Interacts with SHANK3; the interaction probably mediates the association of SHANK3 with the Arp2/3 complex.

The protein localises to the cytoplasm. Its subcellular location is the cytoskeleton. It localises to the cell projection. It is found in the synapse. The protein resides in the synaptosome. The protein localises to the nucleus. In terms of biological role, actin-binding component of the Arp2/3 complex, a multiprotein complex that mediates actin polymerization upon stimulation by nucleation-promoting factor (NPF). The Arp2/3 complex mediates the formation of branched actin networks in the cytoplasm, providing the force for cell motility. Seems to contact the mother actin filament. In addition to its role in the cytoplasmic cytoskeleton, the Arp2/3 complex also promotes actin polymerization in the nucleus, thereby regulating gene transcription and repair of damaged DNA. The Arp2/3 complex promotes homologous recombination (HR) repair in response to DNA damage by promoting nuclear actin polymerization, leading to drive motility of double-strand breaks (DSBs). In Rattus norvegicus (Rat), this protein is Actin-related protein 2/3 complex subunit 2.